Consider the following 297-residue polypeptide: B-lymphocyte antigen CD20 (297 aa).

Topologically, residues 1–51 (MTTPRNSMSGTLPVDPMKSPTAMYPVQKIIPKRMPSVVGPTQNFFMRESKT) are cytoplasmic. Serine 36 is subject to Phosphoserine. The helical transmembrane segment at 52–72 (LGAVQIMNGLFHIALGSLLMI) threads the bilayer. Residues 73–75 (HTD) are Extracellular-facing. The helical transmembrane segment at 76–96 (VCAPICITMWYPLWGGIMFII) threads the bilayer. The Cytoplasmic segment spans residues 97–122 (SGSLLAAADKNPRKSLVKGKMIMNSL). Residues 123–143 (SLFAAISGIIFLIMDIFNITI) form a helical membrane-spanning segment. Residues 144–188 (SHFFKMENLNLIKAPMPYVDIHNCDPANPSEKNSLSIQYCGSIRS) are Extracellular-facing. Residues 189–209 (VFLGVFAVMLIFAFFQKLVTA) form a helical membrane-spanning segment. The Cytoplasmic segment spans residues 210 to 297 (GIVENEWKKL…SSPIENDSIP (88 aa)). A lipid anchor (S-palmitoyl cysteine) is attached at cysteine 220. The residue at position 225 (serine 225) is a Phosphoserine. The tract at residues 274-297 (ELEINFAEPPQEQESSPIENDSIP) is disordered. The span at 281-290 (EPPQEQESSP) shows a compositional bias: low complexity.

It belongs to the MS4A family. Forms homotetramers. Interacts with the heavy and light chains of cell surface IgM, the antigen-binding components of the BCR. In terms of processing, phosphorylated. Might be functionally regulated by protein kinase(s). As to expression, expressed in PBMCs and lymph node from healthy dogs, in B-cells of canine lymphoma, but not in T-cell lymphoma cells and non-T and non-B-cell lymphoma cells.

It localises to the cell membrane. Functionally, B-lymphocyte-specific membrane protein that plays a role in the regulation of cellular calcium influx necessary for the development, differentiation, and activation of B-lymphocytes. Functions as a store-operated calcium (SOC) channel component promoting calcium influx after activation by the B-cell receptor/BCR. This Canis lupus familiaris (Dog) protein is B-lymphocyte antigen CD20 (MS4A1).